Here is a 264-residue protein sequence, read N- to C-terminus: tRNA (guanine-N(7)-)-methyltransferase (264 aa).

The tract at residues Met1–Pro39 is disordered. Residues Thr18–Ala31 show a composition bias toward low complexity. Glu94, Glu119, Asp146, and Asp169 together coordinate S-adenosyl-L-methionine. Asp169 is an active-site residue. Residues Lys173, Asp205, and Thr240–Glu243 contribute to the substrate site.

The protein belongs to the class I-like SAM-binding methyltransferase superfamily. TrmB family.

The catalysed reaction is guanosine(46) in tRNA + S-adenosyl-L-methionine = N(7)-methylguanosine(46) in tRNA + S-adenosyl-L-homocysteine. It functions in the pathway tRNA modification; N(7)-methylguanine-tRNA biosynthesis. Functionally, catalyzes the formation of N(7)-methylguanine at position 46 (m7G46) in tRNA. This is tRNA (guanine-N(7)-)-methyltransferase from Burkholderia mallei (strain ATCC 23344).